A 755-amino-acid chain; its full sequence is Polyribonucleotide nucleotidyltransferase (755 aa).

Aspartate 493 and aspartate 499 together coordinate Mg(2+). A KH domain is found at 560 to 619; that stretch reads PRIMTIQIPVDKIGALIGPGGKTIRNICETTGAQIDIEDDGRVFITTPDGAAARQAISMI. Residues 629 to 698 enclose the S1 motif domain; it reads GDIFLGKVVS…TTGKISLSRR (70 aa). A disordered region spans residues 699–755; the sequence is AVLTGETPEERKAAGAAPRPRPREEQRGGRDEPRSLRDELRGPRREGDRPRPRRRDD. The span at 719–755 shows a compositional bias: basic and acidic residues; it reads RPREEQRGGRDEPRSLRDELRGPRREGDRPRPRRRDD.

Belongs to the polyribonucleotide nucleotidyltransferase family. The cofactor is Mg(2+).

It is found in the cytoplasm. It catalyses the reaction RNA(n+1) + phosphate = RNA(n) + a ribonucleoside 5'-diphosphate. Its function is as follows. Involved in mRNA degradation. Catalyzes the phosphorolysis of single-stranded polyribonucleotides processively in the 3'- to 5'-direction. This chain is Polyribonucleotide nucleotidyltransferase, found in Chloroflexus aurantiacus (strain ATCC 29366 / DSM 635 / J-10-fl).